The chain runs to 131 residues: Small ribosomal subunit protein eS17 (131 aa).

Belongs to the eukaryotic ribosomal protein eS17 family.

This Theileria annulata protein is Small ribosomal subunit protein eS17 (RPS17).